The sequence spans 226 residues: V-type proton ATPase subunit E (226 aa).

It belongs to the V-ATPase E subunit family. In terms of assembly, V-ATPase is a heteromultimeric enzyme made up of two complexes: the ATP-hydrolytic V1 complex and the proton translocation V0 complex. The V1 complex consists of three catalytic AB heterodimers that form a heterohexamer, three peripheral stalks each consisting of EG heterodimers, one central rotor including subunits D and F, and the regulatory subunits C and H. The proton translocation complex V0 consists of the proton transport subunit a, a ring of proteolipid subunits c9c'', rotary subunit d, subunits e and f, and the accessory subunits VhaAC45 and ATP6AP2.

Subunit of the V1 complex of vacuolar(H+)-ATPase (V-ATPase), a multisubunit enzyme composed of a peripheral complex (V1) that hydrolyzes ATP and a membrane integral complex (V0) that translocates protons. V-ATPase is responsible for acidifying and maintaining the pH of intracellular compartments and in some cell types, is targeted to the plasma membrane, where it is responsible for acidifying the extracellular environment. The chain is V-type proton ATPase subunit E (Vha26) from Drosophila melanogaster (Fruit fly).